Reading from the N-terminus, the 326-residue chain is Serine protease 38 (326 aa).

The signal sequence occupies residues 1 to 32 (MAAPASVMGPLGPSALGLLLLLLVVAPPRVAA). The propeptide at 33–59 (LVHRQPENQGISLTGSVACGRPSMEGK) is activation peptide. The 234-residue stretch at 60-293 (ILGGVPAPER…FSKWICDNIE (234 aa)) folds into the Peptidase S1 domain. A disulfide bond links Cys85 and Cys101. The active-site Charge relay system is the His100. Residue Asn125 is glycosylated (N-linked (GlcNAc...) asparagine). The Charge relay system role is filled by Asp150. 3 cysteine pairs are disulfide-bonded: Cys183–Cys251, Cys214–Cys230, and Cys241–Cys269. Residue Ser245 is the Charge relay system of the active site.

The protein belongs to the peptidase S1 family.

The protein resides in the secreted. This Homo sapiens (Human) protein is Serine protease 38 (PRSS38).